A 718-amino-acid chain; its full sequence is DNA ligase (718 aa).

Residues Asp44 to Asp48, Ser93 to Leu94, and Glu127 contribute to the NAD(+) site. The active-site N6-AMP-lysine intermediate is the Lys129. NAD(+) is bound by residues Arg150, Glu186, Lys302, and Lys326. Residues Cys432, Cys435, Cys456, and Cys462 each contribute to the Zn(2+) site. One can recognise a BRCT domain in the interval Thr640–Gly718.

Belongs to the NAD-dependent DNA ligase family. LigA subfamily. Mg(2+) is required as a cofactor. It depends on Mn(2+) as a cofactor.

The catalysed reaction is NAD(+) + (deoxyribonucleotide)n-3'-hydroxyl + 5'-phospho-(deoxyribonucleotide)m = (deoxyribonucleotide)n+m + AMP + beta-nicotinamide D-nucleotide.. Functionally, DNA ligase that catalyzes the formation of phosphodiester linkages between 5'-phosphoryl and 3'-hydroxyl groups in double-stranded DNA using NAD as a coenzyme and as the energy source for the reaction. It is essential for DNA replication and repair of damaged DNA. This Rhizobium etli (strain ATCC 51251 / DSM 11541 / JCM 21823 / NBRC 15573 / CFN 42) protein is DNA ligase.